Reading from the N-terminus, the 325-residue chain is Neural proliferation differentiation and control protein 1 (325 aa).

The signal sequence occupies residues 1-34 (MATPLPPPSPRHLRLLRLLLSGLVLGAALRGAAA). The interval 138–175 (QGLELGLPSTPGTPTPTPHTSLGSPVSSDPVHMSPLEP) is disordered. The helical transmembrane segment at 182-202 (GLALVLILAFCVAGAAALSVA) threads the bilayer. A Phosphoserine modification is found at S229. The segment at 266–290 (EPPKELDTASSDEENEDGDFTVYEC) is disordered. Residues 275-284 (SSDEENEDGD) show a composition bias toward acidic residues.

Belongs to the NPDC1/cab-1 family. As to expression, strongly expressed in adult brain; especially in hippocampus, frontal lobe and temporal lobe.

The protein localises to the membrane. Suppresses oncogenic transformation in neural and non-neural cells and down-regulates neural cell proliferation. Might be involved in transcriptional regulation. The protein is Neural proliferation differentiation and control protein 1 (NPDC1) of Homo sapiens (Human).